The sequence spans 459 residues: tRNA modification GTPase MnmE (459 aa).

3 residues coordinate (6S)-5-formyl-5,6,7,8-tetrahydrofolate: Arg-20, Glu-85, and Arg-124. Positions 221–380 (GLSTVIIGRP…LEEAIQSLFY (160 aa)) constitute a TrmE-type G domain. K(+) is bound at residue Asn-231. Residues 231 to 236 (NVGKSS), 250 to 256 (TDIPGTT), and 275 to 278 (DTAG) each bind GTP. Ser-235 contacts Mg(2+). 3 residues coordinate K(+): Thr-250, Ile-252, and Thr-255. Thr-256 serves as a coordination point for Mg(2+). Lys-459 is a (6S)-5-formyl-5,6,7,8-tetrahydrofolate binding site.

It belongs to the TRAFAC class TrmE-Era-EngA-EngB-Septin-like GTPase superfamily. TrmE GTPase family. Homodimer. Heterotetramer of two MnmE and two MnmG subunits. K(+) is required as a cofactor.

It localises to the cytoplasm. Its function is as follows. Exhibits a very high intrinsic GTPase hydrolysis rate. Involved in the addition of a carboxymethylaminomethyl (cmnm) group at the wobble position (U34) of certain tRNAs, forming tRNA-cmnm(5)s(2)U34. In Bacillus velezensis (strain DSM 23117 / BGSC 10A6 / LMG 26770 / FZB42) (Bacillus amyloliquefaciens subsp. plantarum), this protein is tRNA modification GTPase MnmE.